We begin with the raw amino-acid sequence, 436 residues long: Antilisterial bacteriocin subtilosin biosynthesis protein AlbD (436 aa).

10 helical membrane passes run 27-47 (IAAG…QAGI), 55-75 (TYII…SVTS), 113-133 (LFFF…GAQT), 134-154 (LFWL…GVVL), 164-184 (LMFL…ALMP), 187-207 (TIPL…PVFL), 240-260 (AMLL…FQMM), 270-290 (IYIV…LYSI), 315-335 (FYSG…GFIS), and 395-415 (AILA…LVIV).

It localises to the cell membrane. Its function is as follows. Involved in the production of the bacteriocin subtilosin. Required for immunity to subtilosin. This Bacillus subtilis (strain 168) protein is Antilisterial bacteriocin subtilosin biosynthesis protein AlbD (albD).